The chain runs to 310 residues: tRNA dimethylallyltransferase (310 aa).

19 to 26 (GPTGTGKS) contacts ATP. Position 21-26 (21-26 (TGTGKS)) interacts with substrate.

Belongs to the IPP transferase family. In terms of assembly, monomer. The cofactor is Mg(2+).

It carries out the reaction adenosine(37) in tRNA + dimethylallyl diphosphate = N(6)-dimethylallyladenosine(37) in tRNA + diphosphate. Catalyzes the transfer of a dimethylallyl group onto the adenine at position 37 in tRNAs that read codons beginning with uridine, leading to the formation of N6-(dimethylallyl)adenosine (i(6)A). The chain is tRNA dimethylallyltransferase from Saccharopolyspora erythraea (strain ATCC 11635 / DSM 40517 / JCM 4748 / NBRC 13426 / NCIMB 8594 / NRRL 2338).